The chain runs to 197 residues: Holliday junction branch migration complex subunit RuvA (197 aa).

A domain I region spans residues M1–V63. The segment at N64–L142 is domain II. Residues L142–P146 are flexible linker. The domain III stretch occupies residues A147–K197.

This sequence belongs to the RuvA family. In terms of assembly, homotetramer. Forms an RuvA(8)-RuvB(12)-Holliday junction (HJ) complex. HJ DNA is sandwiched between 2 RuvA tetramers; dsDNA enters through RuvA and exits via RuvB. An RuvB hexamer assembles on each DNA strand where it exits the tetramer. Each RuvB hexamer is contacted by two RuvA subunits (via domain III) on 2 adjacent RuvB subunits; this complex drives branch migration. In the full resolvosome a probable DNA-RuvA(4)-RuvB(12)-RuvC(2) complex forms which resolves the HJ.

The protein localises to the cytoplasm. The RuvA-RuvB-RuvC complex processes Holliday junction (HJ) DNA during genetic recombination and DNA repair, while the RuvA-RuvB complex plays an important role in the rescue of blocked DNA replication forks via replication fork reversal (RFR). RuvA specifically binds to HJ cruciform DNA, conferring on it an open structure. The RuvB hexamer acts as an ATP-dependent pump, pulling dsDNA into and through the RuvAB complex. HJ branch migration allows RuvC to scan DNA until it finds its consensus sequence, where it cleaves and resolves the cruciform DNA. The protein is Holliday junction branch migration complex subunit RuvA of Lactococcus lactis subsp. cremoris (strain MG1363).